The following is a 351-amino-acid chain: Histidinol-phosphate aminotransferase 1 (351 aa).

An N6-(pyridoxal phosphate)lysine modification is found at K210.

It belongs to the class-II pyridoxal-phosphate-dependent aminotransferase family. Histidinol-phosphate aminotransferase subfamily. In terms of assembly, homodimer. The cofactor is pyridoxal 5'-phosphate.

The catalysed reaction is L-histidinol phosphate + 2-oxoglutarate = 3-(imidazol-4-yl)-2-oxopropyl phosphate + L-glutamate. Its pathway is amino-acid biosynthesis; L-histidine biosynthesis; L-histidine from 5-phospho-alpha-D-ribose 1-diphosphate: step 7/9. The polypeptide is Histidinol-phosphate aminotransferase 1 (hisC1) (Pasteurella multocida (strain Pm70)).